The sequence spans 346 residues: Glycerol-3-phosphate dehydrogenase [NAD(P)+] (346 aa).

NADPH-binding residues include serine 15, tryptophan 16, arginine 36, and lysine 110. Lysine 110, glycine 139, and serine 141 together coordinate sn-glycerol 3-phosphate. Alanine 143 contributes to the NADPH binding site. Residues lysine 194, aspartate 247, serine 257, arginine 258, and asparagine 259 each coordinate sn-glycerol 3-phosphate. Lysine 194 functions as the Proton acceptor in the catalytic mechanism. Arginine 258 provides a ligand contact to NADPH. The NADPH site is built by valine 282 and glutamate 284.

This sequence belongs to the NAD-dependent glycerol-3-phosphate dehydrogenase family.

The protein localises to the cytoplasm. It carries out the reaction sn-glycerol 3-phosphate + NAD(+) = dihydroxyacetone phosphate + NADH + H(+). The enzyme catalyses sn-glycerol 3-phosphate + NADP(+) = dihydroxyacetone phosphate + NADPH + H(+). It functions in the pathway membrane lipid metabolism; glycerophospholipid metabolism. In terms of biological role, catalyzes the reduction of the glycolytic intermediate dihydroxyacetone phosphate (DHAP) to sn-glycerol 3-phosphate (G3P), the key precursor for phospholipid synthesis. This chain is Glycerol-3-phosphate dehydrogenase [NAD(P)+], found in Xylella fastidiosa (strain M23).